A 126-amino-acid polypeptide reads, in one-letter code: Protein ApaG (126 aa).

The region spanning 2-126 (SALDTSIRVE…FRLATPGLLH (125 aa)) is the ApaG domain.

The chain is Protein ApaG from Shewanella sp. (strain W3-18-1).